We begin with the raw amino-acid sequence, 553 residues long: Nucleoside-diphosphatase mig-23 (553 aa).

Residues 1-8 lie on the Cytoplasmic side of the membrane; that stretch reads MRVSRRFT. Residues 9–29 form a helical membrane-spanning segment; the sequence is ILAITAMIFLSLIICIYAVAA. Residues 30 to 489 lie on the Lumenal side of the membrane; it reads HTTVNVILQK…IVKETHSASE (460 aa). Glu174 functions as the Proton acceptor in the catalytic mechanism. 2 N-linked (GlcNAc...) asparagine glycosylation sites follow: Asn190 and Asn284. Residues 490 to 510 traverse the membrane as a helical segment; sequence SLWAPLFFLSAVFCLFVLVCA. Topologically, residues 511-553 are cytoplasmic; that stretch reads KEHSLLCFDDKRRASFGLTRRQYSYKMLKEDRTSSSAFLENFA.

Belongs to the GDA1/CD39 NTPase family.

It localises to the golgi apparatus membrane. The enzyme catalyses a ribonucleoside 5'-diphosphate + H2O = a ribonucleoside 5'-phosphate + phosphate + H(+). Its function is as follows. Seems to be able to hydrolyze ADP, UDP and GDP. Supports mig-17 glycosylation and surface expression, which is required for proper migration of distal tip cells during gonad morphogenesis. This Caenorhabditis briggsae protein is Nucleoside-diphosphatase mig-23.